The sequence spans 1017 residues: Rho-GTPase-activating protein LRG1 (1017 aa).

Methionine 1 is modified (N-acetylmethionine). 2 consecutive LIM zinc-binding domains span residues 28 to 88 (CARC…LCQY) and 98 to 148 (CHVC…CKYH). Residues 155-184 (KRCKGCEFPISDQYIEFPKGEEIHCWHPEC) form the LIM zinc-binding 3; truncated domain. The LIM zinc-binding 4 domain occupies 419–474 (CAGCNKYIQEECIQFYEHRWHIACFTCSSCHKNINPRSLTDPTFNKEKKKILCSHC). Serine 562 is subject to Phosphoserine. The tract at residues 570-602 (TDLNDPTKQGDSKNLVIQTDDPSSSQQVSTREN) is disordered. The segment covering 584-602 (LVIQTDDPSSSQQVSTREN) has biased composition (polar residues). One can recognise a Rho-GAP domain in the interval 730–953 (APLDVLCEKW…YLITHNEEMA (224 aa)).

As to quaternary structure, interacts with CDC42, RHO1 and RHO2.

The protein resides in the cytoplasm. The protein localises to the bud. Its subcellular location is the bud neck. Functionally, acts in signal transduction. Activates CDC42, RHO1 and RHO2. Negatively regulates 1,3-beta-glucan synthesis. May be responsible for the down-regulation of CDC42 during mating. This is Rho-GTPase-activating protein LRG1 (LRG1) from Saccharomyces cerevisiae (strain ATCC 204508 / S288c) (Baker's yeast).